Consider the following 827-residue polypeptide: Glycerol-3-phosphate acyltransferase 1, mitochondrial (827 aa).

The Cytoplasmic portion of the chain corresponds to Met-1–Gly-87. The tract at residues Asn-80 to Val-120 is important for mitochondrial localization. The stretch at Leu-88–Arg-118 is an intramembrane region. Topologically, residues Asp-119–Leu-827 are cytoplasmic. The short motif at His-230–Asp-235 is the HXXXXD motif element. 5 residues coordinate CoA: Arg-278, Arg-279, Lys-288, Arg-293, and Arg-328. Residue Ser-380 is modified to Phosphoserine. Arg-462 contributes to the CoA binding site. Phosphoserine occurs at positions 687 and 694. Lys-779 and Lys-783 each carry N6-acetyllysine.

Belongs to the GPAT/DAPAT family. Highest levels in liver, intermediate levels in muscle and kidney, and lowest levels in lung and brain.

Its subcellular location is the mitochondrion outer membrane. It carries out the reaction sn-glycerol 3-phosphate + an acyl-CoA = a 1-acyl-sn-glycero-3-phosphate + CoA. It catalyses the reaction (9Z,12Z)-octadecadienoyl-CoA + sn-glycerol 3-phosphate = 1-(9Z,12Z)-octadecadienoyl-sn-glycero-3-phosphate + CoA. The enzyme catalyses sn-glycerol 3-phosphate + (9Z)-octadecenoyl-CoA = 1-(9Z-octadecenoyl)-sn-glycero-3-phosphate + CoA. The catalysed reaction is sn-glycerol 3-phosphate + octadecanoyl-CoA = 1-octadecanoyl-sn-glycero-3-phosphate + CoA. It carries out the reaction sn-glycerol 3-phosphate + hexadecanoyl-CoA = 1-hexadecanoyl-sn-glycero-3-phosphate + CoA. It catalyses the reaction dodecanoyl-CoA + sn-glycerol 3-phosphate = 1-dodecanoyl-sn-glycerol 3-phosphate + CoA. The enzyme catalyses 1-acyl-sn-glycero-3-phospho-(1'-sn-glycerol) + an acyl-CoA = a 1,2-diacyl-sn-glycero-3-phospho-(1'-sn-glycerol) + CoA. Its pathway is phospholipid metabolism; CDP-diacylglycerol biosynthesis; CDP-diacylglycerol from sn-glycerol 3-phosphate: step 1/3. Functionally, mitochondrial membrane protein that catalyzes the essential first step of biosynthesis of glycerolipids such as triglycerides, phosphatidic acids and lysophosphatidic acids. Esterifies acyl-group from acyl-coenzyme A (acyl-CoA) to the sn-1 position of glycerol-3-phosphate, to produce lysophosphatidic acid. Has a narrow hydrophobic binding cleft that selects for a linear acyl chain. Catalytic activity is higher for substrates with a 16-carbon acyl chain. This is Glycerol-3-phosphate acyltransferase 1, mitochondrial from Mus musculus (Mouse).